A 192-amino-acid chain; its full sequence is MNITTADFFCSYSSLNGLPSDGRPEIVFVGRSNVGKSSLLNSLCARKGLAKTSSTPGKTRLINYFIINDNLYFVDLPGYGYAKVGQGERESWGKLLTGYIQKRGEIALVVLLVDSRHPGMASDLEMMEFLDYCGRPFGIVLTKWDKLKQAEKSKASRTIESCAPNARFIVNYSSLSGSGRDRLLASIDTFTQ.

In terms of domain architecture, EngB-type G spans 22 to 192 (GRPEIVFVGR…LLASIDTFTQ (171 aa)). GTP contacts are provided by residues 30–37 (GRSNVGKS), 57–61 (GKTRL), 75–78 (DLPG), 142–145 (TKWD), and 172–174 (YSS). 2 residues coordinate Mg(2+): S37 and T59.

Belongs to the TRAFAC class TrmE-Era-EngA-EngB-Septin-like GTPase superfamily. EngB GTPase family. Mg(2+) serves as cofactor.

Its function is as follows. Necessary for normal cell division and for the maintenance of normal septation. This is Probable GTP-binding protein EngB from Chlorobaculum tepidum (strain ATCC 49652 / DSM 12025 / NBRC 103806 / TLS) (Chlorobium tepidum).